A 94-amino-acid polypeptide reads, in one-letter code: YcgL domain-containing protein VP0875 (94 aa).

The YcgL domain maps to 1–84 (MLCSIYKSSK…PPENLLEKYK (84 aa)).

This Vibrio parahaemolyticus serotype O3:K6 (strain RIMD 2210633) protein is YcgL domain-containing protein VP0875.